A 325-amino-acid polypeptide reads, in one-letter code: MATVNKTPVIVVPVIDRPPSETFPNLHEHINDQKFDDVKDNEVMPEKRNVVIVKDDPDHYKDYAFIHWTGGNIRNDDKYTHFFSGFCNTMCTEETKRNIARHLALWDSKFFTELENKKVEYVVIVENDNVIEDITFLRPVLKAMHDKKIDILQMREIITGNKVKTELVMDKNHVIFTYTGGYDVSLSAYIIRVTTALNIVDEIIKSGGLSSGFYFEIARIENEIKINRQIMDNSAKYVEHDPRLVAEHRFENMKPNFWSRIGTAAVKRYPGVMYAFTTPLISFFGLFDINVIGLIVILFIMFMLIFNVKSKLLWFLTGTFVTAFI.

Over 1-285 the chain is Virion surface; it reads MATVNKTPVI…FTTPLISFFG (285 aa). A helical; Signal-anchor transmembrane segment spans residues 286 to 306; it reads LFDINVIGLIVILFIMFMLIF. Residues 307–325 lie on the Intravirion side of the membrane; the sequence is NVKSKLLWFLTGTFVTAFI.

Belongs to the orthopoxvirus OPG108 family. Does not contain disulfide bonds.

The protein localises to the virion membrane. Its function is as follows. Envelope protein that binds to heparan sulfate on the cell surface and might provide virion attachment to target cell. In Variola virus (isolate Human/India/Ind3/1967) (VARV), this protein is Envelope protein H3 (OPG108).